The chain runs to 305 residues: tRNA pseudouridine synthase B (305 aa).

Asp-41 acts as the Nucleophile in catalysis.

The protein belongs to the pseudouridine synthase TruB family. Type 1 subfamily.

The enzyme catalyses uridine(55) in tRNA = pseudouridine(55) in tRNA. In terms of biological role, responsible for synthesis of pseudouridine from uracil-55 in the psi GC loop of transfer RNAs. In Prochlorococcus marinus subsp. pastoris (strain CCMP1986 / NIES-2087 / MED4), this protein is tRNA pseudouridine synthase B.